The primary structure comprises 253 residues: Histone-arginine methyltransferase METTL23 (253 aa).

The disordered stretch occupies residues 1 to 23; the sequence is MDSVRPRAPWAPPPDPASLDSPT.

Belongs to the methyltransferase superfamily. METTL23 family. As to quaternary structure, interacts with HSPA5, HSP90B1, TUBULIN, UGGT1 and UGGT2. Interacts with TET3. Interacts with STPG4. As to expression, ubiquitously expressed.

Its subcellular location is the nucleus. It localises to the cytoplasm. It catalyses the reaction L-arginyl-[protein] + 2 S-adenosyl-L-methionine = N(omega),N(omega)-dimethyl-L-arginyl-[protein] + 2 S-adenosyl-L-homocysteine + 2 H(+). Histone methyltransferase that dimethylates histone H3 at 'Arg-17', forming asymmetric dimethylarginine (H3R17me2a), leading to activate transcription via chromatin remodeling. Maternal factor involved in epigenetic chromatin reprogramming of the paternal genome in the zygote: mediates H3R17me2a, promoting histone H3.3 incorporation in the male pronucleus, leading to TET3 recruitment and subsequent DNA demethylation. This Mus musculus (Mouse) protein is Histone-arginine methyltransferase METTL23.